Consider the following 421-residue polypeptide: Serine--tRNA ligase (421 aa).

Position 230–232 (230–232) interacts with L-serine; sequence TAE. 259-261 lines the ATP pocket; sequence RRE. Position 282 (Glu282) interacts with L-serine. 346 to 349 is an ATP binding site; the sequence is EISS. Residue Ser380 participates in L-serine binding.

This sequence belongs to the class-II aminoacyl-tRNA synthetase family. Type-1 seryl-tRNA synthetase subfamily. Homodimer. The tRNA molecule binds across the dimer.

The protein localises to the cytoplasm. It carries out the reaction tRNA(Ser) + L-serine + ATP = L-seryl-tRNA(Ser) + AMP + diphosphate + H(+). The enzyme catalyses tRNA(Sec) + L-serine + ATP = L-seryl-tRNA(Sec) + AMP + diphosphate + H(+). It participates in aminoacyl-tRNA biosynthesis; selenocysteinyl-tRNA(Sec) biosynthesis; L-seryl-tRNA(Sec) from L-serine and tRNA(Sec): step 1/1. Catalyzes the attachment of serine to tRNA(Ser). Is also able to aminoacylate tRNA(Sec) with serine, to form the misacylated tRNA L-seryl-tRNA(Sec), which will be further converted into selenocysteinyl-tRNA(Sec). This chain is Serine--tRNA ligase, found in Methanosarcina acetivorans (strain ATCC 35395 / DSM 2834 / JCM 12185 / C2A).